Here is a 209-residue protein sequence, read N- to C-terminus: Transmembrane emp24 domain-containing protein B (209 aa).

An N-terminal signal peptide occupies residues 1 to 24 (MNKTNQLINICILVTLFLIGSSSA). Residues 25–174 (LTLQVEPKSQ…RDTSESTNAR (150 aa)) are Lumenal-facing. Positions 34-119 (QECFYNFIES…AKVVTFTWAS (86 aa)) constitute a GOLD domain. Residues 175-195 (VVWWTIAEVIVLVVMGVGQIW) form a helical membrane-spanning segment. Topologically, residues 196–209 (YLRKWFDNKSTGRV) are cytoplasmic.

This sequence belongs to the EMP24/GP25L family.

The protein localises to the cytoplasmic vesicle membrane. Functionally, could have a role in the budding of coatomer-coated and other species of coated vesicles. This chain is Transmembrane emp24 domain-containing protein B (empB), found in Dictyostelium discoideum (Social amoeba).